The primary structure comprises 440 residues: Tuliposide B-converting enzyme 1, amyloplastic (440 aa).

Residues 1 to 58 (MSIVSFCSSLPAGPHGFKHGRGTRDMVHMPCIVRRTARSPAQACRLLRWNKYHCAAVP) constitute an amyloplast transit peptide. Ser-232 serves as the catalytic Acyl-ester intermediate. Catalysis depends on charge relay system residues Asp-325 and His-357.

This sequence belongs to the AB hydrolase superfamily. In terms of assembly, homodimer. Not glycosylated. In terms of tissue distribution, expressed in the pollen grains.

Its subcellular location is the plastid. The protein localises to the amyloplast. It carries out the reaction 6-tuliposide B = tulipalin B + D-glucose. Its activity is regulated as follows. Inhibited by Ag(+), Cu(2+), Fe(2+), Hg(2+), V(3+) and phenylmethylsulfonyl fluoride (PMSF). In terms of biological role, lactone-forming carboxylesterase, specifically catalyzing intramolecular transesterification, but not hydrolysis. Involved in the biosynthesis of tulipalins, defensive chemicals that show antimicrobial activities against a broad range of strains of bacteria and fungi. Substrates are 6-tuliposide B &gt; 6-tuliposide A. This Tulipa gesneriana (Garden tulip) protein is Tuliposide B-converting enzyme 1, amyloplastic.